The primary structure comprises 954 residues: Leucine--tRNA ligase (954 aa).

The 'HIGH' region motif lies at 40 to 51; sequence PYPSGAGLHVGH. A 'KMSKS' region motif is present at residues 729-733; it reads KMSKS. Residue Lys732 coordinates ATP.

It belongs to the class-I aminoacyl-tRNA synthetase family.

It localises to the cytoplasm. The catalysed reaction is tRNA(Leu) + L-leucine + ATP = L-leucyl-tRNA(Leu) + AMP + diphosphate. The sequence is that of Leucine--tRNA ligase from Flavobacterium johnsoniae (strain ATCC 17061 / DSM 2064 / JCM 8514 / BCRC 14874 / CCUG 350202 / NBRC 14942 / NCIMB 11054 / UW101) (Cytophaga johnsonae).